The sequence spans 417 residues: Serine hydroxymethyltransferase (417 aa).

Residue lysine 54 is modified to N6-acetyllysine. (6S)-5,6,7,8-tetrahydrofolate-binding positions include leucine 121 and 125–127 (GHL). Residue lysine 229 is modified to N6-(pyridoxal phosphate)lysine. N6-acetyllysine is present on residues lysine 250, lysine 285, and lysine 354. 355–357 (SPF) provides a ligand contact to (6S)-5,6,7,8-tetrahydrofolate. Lysine 375 carries the post-translational modification N6-acetyllysine.

The protein belongs to the SHMT family. Homodimer. It depends on pyridoxal 5'-phosphate as a cofactor.

Its subcellular location is the cytoplasm. The catalysed reaction is (6R)-5,10-methylene-5,6,7,8-tetrahydrofolate + glycine + H2O = (6S)-5,6,7,8-tetrahydrofolate + L-serine. Its pathway is one-carbon metabolism; tetrahydrofolate interconversion. The protein operates within amino-acid biosynthesis; glycine biosynthesis; glycine from L-serine: step 1/1. In terms of biological role, catalyzes the reversible interconversion of serine and glycine with tetrahydrofolate (THF) serving as the one-carbon carrier. This reaction serves as the major source of one-carbon groups required for the biosynthesis of purines, thymidylate, methionine, and other important biomolecules. Also exhibits THF-independent aldolase activity toward beta-hydroxyamino acids, producing glycine and aldehydes, via a retro-aldol mechanism. In Escherichia coli O17:K52:H18 (strain UMN026 / ExPEC), this protein is Serine hydroxymethyltransferase.